The chain runs to 180 residues: Small ribosomal subunit protein bS21c (180 aa).

The N-terminal 79 residues, methionine 1–tyrosine 79, are a transit peptide targeting the chloroplast. The span at leucine 14 to serine 45 shows a compositional bias: low complexity. Disordered regions lie at residues leucine 14 to histidine 49 and asparagine 124 to phenylalanine 180. Residues lysine 130–proline 147 show a composition bias toward basic residues. Residues glycine 154–aspartate 166 show a composition bias toward basic and acidic residues.

Component of the chloroplast small ribosomal subunit (SSU). Mature 70S chloroplast ribosomes of higher plants consist of a small (30S) and a large (50S) subunit. The 30S small subunit contains 1 molecule of ribosomal RNA (16S rRNA) and 24 different proteins. The 50S large subunit contains 3 rRNA molecules (23S, 5S and 4.5S rRNA) and 33 different proteins. bS21c binds directly to 16S ribosomal RNA.

Its subcellular location is the plastid. The protein localises to the chloroplast. Component of the chloroplast ribosome (chloro-ribosome), a dedicated translation machinery responsible for the synthesis of chloroplast genome-encoded proteins, including proteins of the transcription and translation machinery and components of the photosynthetic apparatus. This Spinacia oleracea (Spinach) protein is Small ribosomal subunit protein bS21c (rps21).